The sequence spans 442 residues: Histidinol dehydrogenase (442 aa).

Tyr-138, Gln-196, and Asn-219 together coordinate NAD(+). Substrate contacts are provided by Ser-245, Gln-267, and His-270. Positions 267 and 270 each coordinate Zn(2+). Active-site proton acceptor residues include Glu-334 and His-335. His-335, Asp-368, Glu-422, and His-427 together coordinate substrate. Asp-368 contributes to the Zn(2+) binding site. His-427 is a binding site for Zn(2+).

The protein belongs to the histidinol dehydrogenase family. Homodimer. Zn(2+) is required as a cofactor.

The enzyme catalyses L-histidinol + 2 NAD(+) + H2O = L-histidine + 2 NADH + 3 H(+). Its pathway is amino-acid biosynthesis; L-histidine biosynthesis; L-histidine from 5-phospho-alpha-D-ribose 1-diphosphate: step 9/9. Functionally, catalyzes the sequential NAD-dependent oxidations of L-histidinol to L-histidinaldehyde and then to L-histidine. In Pectobacterium atrosepticum (strain SCRI 1043 / ATCC BAA-672) (Erwinia carotovora subsp. atroseptica), this protein is Histidinol dehydrogenase.